A 327-amino-acid polypeptide reads, in one-letter code: Aspartate--ammonia ligase (327 aa).

This sequence belongs to the class-II aminoacyl-tRNA synthetase family. AsnA subfamily.

The protein resides in the cytoplasm. The catalysed reaction is L-aspartate + NH4(+) + ATP = L-asparagine + AMP + diphosphate + H(+). It functions in the pathway amino-acid biosynthesis; L-asparagine biosynthesis; L-asparagine from L-aspartate (ammonia route): step 1/1. This chain is Aspartate--ammonia ligase, found in Bacillus anthracis (strain A0248).